Reading from the N-terminus, the 133-residue chain is uncharacterized protein (133 aa).

The tract at residues 107 to 133 (TSHHRAAGLQSQHAPGSGRVRITGGKV) is disordered.

This is an uncharacterized protein from Homo sapiens (Human).